Consider the following 344-residue polypeptide: S-adenosylmethionine:tRNA ribosyltransferase-isomerase (344 aa).

Belongs to the QueA family. In terms of assembly, monomer.

Its subcellular location is the cytoplasm. It catalyses the reaction 7-aminomethyl-7-carbaguanosine(34) in tRNA + S-adenosyl-L-methionine = epoxyqueuosine(34) in tRNA + adenine + L-methionine + 2 H(+). It participates in tRNA modification; tRNA-queuosine biosynthesis. Its function is as follows. Transfers and isomerizes the ribose moiety from AdoMet to the 7-aminomethyl group of 7-deazaguanine (preQ1-tRNA) to give epoxyqueuosine (oQ-tRNA). The chain is S-adenosylmethionine:tRNA ribosyltransferase-isomerase from Pediococcus pentosaceus (strain ATCC 25745 / CCUG 21536 / LMG 10740 / 183-1w).